The sequence spans 335 residues: Galactosylgalactosylxylosylprotein 3-beta-glucuronosyltransferase 3 (335 aa).

The Cytoplasmic portion of the chain corresponds to 1–7; that stretch reads MKLKLKN. A helical; Signal-anchor for type II membrane protein membrane pass occupies residues 8-28; the sequence is VFLAYFLVSIAGLLYALVQLG. The Lumenal segment spans residues 29–335; it reads QPCDCLPPLR…GQGSDPAIEV (307 aa). Mn(2+) is bound at residue aspartate 196. Residue glutamate 281 is the Proton acceptor of the active site. The N-linked (GlcNAc...) asparagine glycan is linked to asparagine 300. The span at 312–322 shows a compositional bias: basic and acidic residues; that stretch reads EKPKMKQEEQL. Positions 312–335 are disordered; it reads EKPKMKQEEQLQRQGQGSDPAIEV.

This sequence belongs to the glycosyltransferase 43 family. As to quaternary structure, homodimer; disulfide-linked. Interacts with PXYLP1; the interaction increases the 2-phosphoxylose phosphatase activity of PXYLP1 during completion of linkage region formation in a B3GAT3-mediated manner. Mn(2+) serves as cofactor. Post-translationally, N-glycosylated. Liver, brain and heart. Moderate expression seen in lung, skeletal muscle, kidney and testis.

The protein localises to the golgi apparatus membrane. The protein resides in the golgi apparatus. Its subcellular location is the cis-Golgi network. The enzyme catalyses 3-O-(beta-D-galactosyl-(1-&gt;3)-beta-D-galactosyl-(1-&gt;4)-beta-D-xylosyl)-L-seryl-[protein] + UDP-alpha-D-glucuronate = 3-O-(beta-D-GlcA-(1-&gt;3)-beta-D-Gal-(1-&gt;3)-beta-D-Gal-(1-&gt;4)-beta-D-Xyl)-L-seryl-[protein] + UDP + H(+). It functions in the pathway protein modification; protein glycosylation. Its function is as follows. Glycosaminoglycans biosynthesis. Involved in forming the linkage tetrasaccharide present in heparan sulfate and chondroitin sulfate. Transfers a glucuronic acid moiety from the uridine diphosphate-glucuronic acid (UDP-GlcUA) to the common linkage region trisaccharide Gal-beta-1,3-Gal-beta-1,4-Xyl covalently bound to a Ser residue at the glycosaminylglycan attachment site of proteoglycans. Can also play a role in the biosynthesis of l2/HNK-1 carbohydrate epitope on glycoproteins. Highest activity seen with Gal-beta-1,3-Gal-beta-O-R (where R=naphthalenemethanol or benzyl alcohol). Stimulates 2-phosphoxylose phosphatase activity of PXYLP1 in presence of uridine diphosphate-glucuronic acid (UDP-GlcUA) during completion of linkage region formation. This Cricetulus griseus (Chinese hamster) protein is Galactosylgalactosylxylosylprotein 3-beta-glucuronosyltransferase 3 (B3GAT3).